Consider the following 399-residue polypeptide: Lipoyl synthase, mitochondrial (399 aa).

The transit peptide at 1–14 directs the protein to the mitochondrion; the sequence is MALISRSCGAASRY. The span at 39–52 shows a compositional bias: low complexity; the sequence is AASTSSSSSPSPST. The segment at 39-60 is disordered; it reads AASTSSSSSPSPSTHNDRKKDL. 7 residues coordinate [4Fe-4S] cluster: cysteine 128, cysteine 133, cysteine 139, cysteine 159, cysteine 163, cysteine 166, and serine 374. The region spanning 144 to 363 is the Radical SAM core domain; sequence EYATATATIM…EKVGQEMGFI (220 aa).

It belongs to the radical SAM superfamily. Lipoyl synthase family. Requires [4Fe-4S] cluster as cofactor.

It localises to the mitochondrion. It catalyses the reaction [[Fe-S] cluster scaffold protein carrying a second [4Fe-4S](2+) cluster] + N(6)-octanoyl-L-lysyl-[protein] + 2 oxidized [2Fe-2S]-[ferredoxin] + 2 S-adenosyl-L-methionine + 4 H(+) = [[Fe-S] cluster scaffold protein] + N(6)-[(R)-dihydrolipoyl]-L-lysyl-[protein] + 4 Fe(3+) + 2 hydrogen sulfide + 2 5'-deoxyadenosine + 2 L-methionine + 2 reduced [2Fe-2S]-[ferredoxin]. Its pathway is protein modification; protein lipoylation via endogenous pathway; protein N(6)-(lipoyl)lysine from octanoyl-[acyl-carrier-protein]: step 2/2. Functionally, catalyzes the radical-mediated insertion of two sulfur atoms into the C-6 and C-8 positions of the octanoyl moiety bound to the lipoyl domains of lipoate-dependent enzymes, thereby converting the octanoylated domains into lipoylated derivatives. The protein is Lipoyl synthase, mitochondrial (lias) of Danio rerio (Zebrafish).